The chain runs to 421 residues: Acylglycerol kinase, mitochondrial (421 aa).

An N6-acetyllysine modification is found at lysine 6. Positions 15 to 31 are hydrophobic; the sequence is TTAGLCLLTWGGHWLYG. Residues 58–199 form the DAGKc domain; the sequence is AQVKKATVFL…LDVLQIKGEK (142 aa). Residues 252–271 are disordered; the sequence is ISYTGPRERPPIEPEETPPR.

The protein belongs to the AGK family. Component of the TIM22 complex, which core is composed of TIMM22, associated with TIMM10 (TIMM10A and/or TIMM10B), TIMM9, AGK and TIMM29. Interacts with SMIM26. Requires Mg(2+) as cofactor. In terms of tissue distribution, ubiquitously expressed.

The protein resides in the mitochondrion inner membrane. Its subcellular location is the mitochondrion intermembrane space. It catalyses the reaction a monoacylglycerol + ATP = a monoacyl-sn-glycero-3-phosphate + ADP + H(+). The enzyme catalyses a 1,2-diacyl-sn-glycerol + ATP = a 1,2-diacyl-sn-glycero-3-phosphate + ADP + H(+). It carries out the reaction an N-acylsphing-4-enine + ATP = an N-acylsphing-4-enine 1-phosphate + ADP + H(+). The catalysed reaction is 1,2-di-(9Z-octadecenoyl)-sn-glycerol + ATP = 1,2-di-(9Z-octadecenoyl)-sn-glycero-3-phosphate + ADP + H(+). It catalyses the reaction 1-(9Z-octadecenoyl)-sn-glycerol + ATP = 1-(9Z-octadecenoyl)-sn-glycero-3-phosphate + ADP + H(+). The enzyme catalyses 1-(5Z,8Z,11Z,14Z-eicosatetraenoyl)-sn-glycerol + ATP = 1-(5Z,8Z,11Z,14Z-eicosatetraenoyl)-sn-glycero-3-phosphate + ADP + H(+). It carries out the reaction a 1-acyl-sn-glycerol + ATP = a 1-acyl-sn-glycero-3-phosphate + ADP + H(+). The catalysed reaction is 1-hexadecanoyl-sn-glycerol + ATP = 1-hexadecanoyl-sn-glycero-3-phosphate + ADP + H(+). It catalyses the reaction a 2-acylglycerol + ATP = a 2-acyl-sn-glycerol 3-phosphate + ADP + H(+). The enzyme catalyses 2-(5Z,8Z,11Z,14Z-eicosatetraenoyl)-glycerol + ATP = 2-(5Z,8Z,11Z,14Z-eicosatetraenoyl)-sn-glycero-3-phosphate + ADP + H(+). It carries out the reaction N-(hexanoyl)sphing-4-enine + ATP = N-hexanoylsphing-4-enine 1-phosphate + ADP + H(+). It functions in the pathway lipid metabolism; glycerolipid metabolism. Its activity is regulated as follows. Both the ceramide and diacylglycerol kinase activities are inhibited by sphingosine and stimulated by cardiolipin. Both activities are stimulated by calcium when magnesium concentrations are low but inhibited by calcium when magnesium concentrations are high. In terms of biological role, lipid kinase that can phosphorylate both monoacylglycerol and diacylglycerol to form lysophosphatidic acid (LPA) and phosphatidic acid (PA), respectively. Phosphorylates ceramide but not sphingosine. Phosphorylates 1,2-dioleoylglycerol more rapidly than 2,3-dioleoylglycerol. Independently of its lipid kinase activity, acts as a component of the TIM22 complex. The TIM22 complex mediates the import and insertion of multi-pass transmembrane proteins into the mitochondrial inner membrane by forming a twin-pore translocase that uses the membrane potential as the external driving force. In the TIM22 complex, required for the import of a subset of metabolite carriers into mitochondria, such as ANT1/SLC25A4 and SLC25A24, while it is not required for the import of TIMM23. Overexpression increases the formation and secretion of LPA, resulting in transactivation of EGFR and activation of the downstream MAPK signaling pathway, leading to increased cell growth. In Mus musculus (Mouse), this protein is Acylglycerol kinase, mitochondrial.